The primary structure comprises 339 residues: Biotin synthase (339 aa).

In terms of domain architecture, Radical SAM core spans 51-278 (SEVELATLLS…KARVRLSAGR (228 aa)). The [4Fe-4S] cluster site is built by Cys-66, Cys-70, and Cys-73. [2Fe-2S] cluster is bound by residues Cys-110, Cys-141, Cys-201, and Arg-273.

Belongs to the radical SAM superfamily. Biotin synthase family. As to quaternary structure, homodimer. The cofactor is [4Fe-4S] cluster. It depends on [2Fe-2S] cluster as a cofactor.

The enzyme catalyses (4R,5S)-dethiobiotin + (sulfur carrier)-SH + 2 reduced [2Fe-2S]-[ferredoxin] + 2 S-adenosyl-L-methionine = (sulfur carrier)-H + biotin + 2 5'-deoxyadenosine + 2 L-methionine + 2 oxidized [2Fe-2S]-[ferredoxin]. Its pathway is cofactor biosynthesis; biotin biosynthesis; biotin from 7,8-diaminononanoate: step 2/2. Functionally, catalyzes the conversion of dethiobiotin (DTB) to biotin by the insertion of a sulfur atom into dethiobiotin via a radical-based mechanism. This chain is Biotin synthase, found in Herminiimonas arsenicoxydans.